The chain runs to 51 residues: Insulin (51 aa).

Cystine bridges form between Cys-7/Cys-37, Cys-19/Cys-50, and Cys-36/Cys-41.

It belongs to the insulin family. In terms of assembly, heterodimer of a B chain and an A chain linked by two disulfide bonds.

Its subcellular location is the secreted. Its function is as follows. Insulin decreases blood glucose concentration. It increases cell permeability to monosaccharides, amino acids and fatty acids. It accelerates glycolysis, the pentose phosphate cycle, and glycogen synthesis in liver. This Anguilla rostrata (American eel) protein is Insulin (ins).